Consider the following 105-residue polypeptide: Multidrug resistance protein EbrA (105 aa).

Transmembrane regions (helical) follow at residues 2-22 (LVGY…AAML), 35-55 (ALVV…LNHI), 57-77 (LSLS…VIGV), and 84-104 (LNAK…LLNW).

Belongs to the drug/metabolite transporter (DMT) superfamily. Small multidrug resistance (SMR) (TC 2.A.7.1) family. EbrA/EbrB subfamily. The efflux pump is composed of EbrA and EbrB.

It localises to the cell membrane. Functionally, part of a multidrug efflux pump. Confers resistance to cationic lipophilic dyes such as ethidium bromide, acriflavine, pyronine Y and safranin O. The efflux is probably coupled to an influx of protons. The polypeptide is Multidrug resistance protein EbrA (ebrA) (Bacillus atrophaeus).